Here is a 177-residue protein sequence, read N- to C-terminus: Large ribosomal subunit protein uL6 (177 aa).

The protein belongs to the universal ribosomal protein uL6 family. Part of the 50S ribosomal subunit.

Its function is as follows. This protein binds to the 23S rRNA, and is important in its secondary structure. It is located near the subunit interface in the base of the L7/L12 stalk, and near the tRNA binding site of the peptidyltransferase center. This is Large ribosomal subunit protein uL6 from Rickettsia conorii (strain ATCC VR-613 / Malish 7).